The sequence spans 142 residues: Baculoviral IAP repeat-containing protein 5 (142 aa).

A BIR repeat occupies 18 to 88 (RVSTFKNWPF…KHSSGCAFLS (71 aa)). Residue S20 is modified to Phosphoserine; by AURKC. K23 carries the N6-acetyllysine modification. A Phosphothreonine; by CDK1 and CDK15 modification is found at T34. Position 48 is a phosphothreonine; by CK2; in vitro (T48). Zn(2+) is bound by residues C57, C60, H77, and C84. K90, K110, K112, and K115 each carry N6-acetyllysine. At T117 the chain carries Phosphothreonine; by AURKB.

The protein belongs to the IAP family. Monomer or homodimer. Exists as a homodimer in the apo state and as a monomer in the CPC-bound state. The monomer protects cells against apoptosis more efficiently than the dimer. Only the dimeric form is capable of enhancing tubulin stability in cells. When phosphorylated, interacts with LAMTOR5/HBXIP; the resulting complex binds pro-CASP9, as well as active CASP9, but much less efficiently. Component of the chromosomal passenger complex (CPC) composed of at least BIRC5/survivin, CDCA8/borealin, INCENP, AURKB or AURKC; in the complex forms a triple-helix bundle-based subcomplex with INCENP and CDCA8. Interacts with JTB. Interacts (via BIR domain) with histone H3 phosphorylated at 'Thr-3' (H3pT3). Interacts with EVI5. Interacts with GTP-bound RAN in both the S and M phases of the cell cycle. Interacts with USP9X. Interacts with tubulin. Interacts with BIRC2/c-IAP1. The monomeric form interacts with XIAP/BIRC4. Both the dimeric and monomeric form can interact with DIABLO/SMAC. Interacts with BIRC6/bruce. Interacts with FBXL7; this interaction facilitates the polyubiquitination and subsequent proteasomal degradation of BIRC5 by the SCF(FBXL7) E3 ubiquitin-protein ligase complex. Ubiquitinated by the Cul9-RING ubiquitin-protein ligase complex, leading to its degradation. Ubiquitination is required for centrosomal targeting. Deubiquitinated by USP35 or USP38; leading to stabilization. In terms of processing, in vitro phosphorylation at Thr-117 by AURKB prevents interaction with INCENP and localization to mitotic chromosomes. Phosphorylation at Thr-48 by CK2 is critical for its mitotic and anti-apoptotic activities. Phosphorylation at Thr-34 by CDK15 is critical for its anti-apoptotic activity. Phosphorylation at Ser-20 by AURKC is critical for regulation of proper chromosome alignment and segregation, and possibly cytokinesis. As to expression, expressed in spleen, lung, brain, heart, kidney and intestine (at protein level). Expressed in cochlea including the organ of Corti, the lateral wall, the interdental cells of the Limbus as well as in cells of the cochlear nerve and the spiral ganglions (at protein level). Also expressed in Schwann cells (at protein level). Not expressed in cells of the inner and outer sulcus or the Reissner's membrane (at protein level).

It localises to the cytoplasm. Its subcellular location is the nucleus. It is found in the chromosome. The protein localises to the centromere. The protein resides in the cytoskeleton. It localises to the spindle. Its subcellular location is the kinetochore. It is found in the midbody. Its function is as follows. Multitasking protein that has dual roles in promoting cell proliferation and preventing apoptosis. Component of a chromosome passage protein complex (CPC) which is essential for chromosome alignment and segregation during mitosis and cytokinesis. Acts as an important regulator of the localization of this complex; directs CPC movement to different locations from the inner centromere during prometaphase to midbody during cytokinesis and participates in the organization of the center spindle by associating with polymerized microtubules. Involved in the recruitment of CPC to centromeres during early mitosis via association with histone H3 phosphorylated at 'Thr-3' (H3pT3) during mitosis. The complex with RAN plays a role in mitotic spindle formation by serving as a physical scaffold to help deliver the RAN effector molecule TPX2 to microtubules. May counteract a default induction of apoptosis in G2/M phase. The acetylated form represses STAT3 transactivation of target gene promoters. May play a role in neoplasia. Inhibitor of CASP3 and CASP7. Essential for the maintenance of mitochondrial integrity and function. This chain is Baculoviral IAP repeat-containing protein 5, found in Cavia porcellus (Guinea pig).